A 446-amino-acid polypeptide reads, in one-letter code: Probable D-serine dehydratase (446 aa).

N6-(pyridoxal phosphate)lysine is present on lysine 116.

The protein belongs to the serine/threonine dehydratase family. DsdA subfamily. The cofactor is pyridoxal 5'-phosphate.

It carries out the reaction D-serine = pyruvate + NH4(+). This chain is Probable D-serine dehydratase, found in Bacillus cereus (strain ZK / E33L).